A 439-amino-acid chain; its full sequence is Serine/threonine-protein kinase 2 (439 aa).

One can recognise a Protein kinase domain in the interval 87–439 (NDDFYHISTG…IFSDWINGRN (353 aa)). Residues 93 to 101 (ISTGGYGIV) and Lys117 contribute to the ATP site. Asp307 functions as the Proton acceptor in the catalytic mechanism.

Belongs to the protein kinase superfamily. Ser/Thr protein kinase family. Poxviruses subfamily. Phosphorylated in vivo. Autophosphorylated in vitro.

The protein resides in the host endoplasmic reticulum. The protein localises to the host endoplasmic reticulum-Golgi intermediate compartment. The enzyme catalyses L-seryl-[protein] + ATP = O-phospho-L-seryl-[protein] + ADP + H(+). The catalysed reaction is L-threonyl-[protein] + ATP = O-phospho-L-threonyl-[protein] + ADP + H(+). Its function is as follows. Essential serine-protein kinase involved in the early stage of virion morphogenesis. The protein is Serine/threonine-protein kinase 2 (OPG054) of Homo sapiens (Human).